Reading from the N-terminus, the 328-residue chain is DhaKLM operon coactivator DhaQ (328 aa).

A DhaK domain is found at 6–328 (STNEIPEEML…LNVPTGAFAW (323 aa)). The residue at position 215 (H215) is a Tele-(1,2,3-trihydroxypropan-2-yl)histidine.

In terms of assembly, homodimer. Interacts with a homodimer of DhaS.

In terms of biological role, coactivator for the transcription factor DhaS. The heterotetramer formed by DhaQ and DhaS functions as a transcriptional regulator. Activated by covalent binding of dihydroxyacetone to DhaQ. The complex activates the dhaKLM operon. The protein is DhaKLM operon coactivator DhaQ (dhaQ) of Lactococcus lactis subsp. lactis (strain IL1403) (Streptococcus lactis).